Consider the following 448-residue polypeptide: Trigger factor (448 aa).

The PPIase FKBP-type domain maps to 172-257; sequence GDRVTVDFVG…MKKIEWPHLP (86 aa).

Belongs to the FKBP-type PPIase family. Tig subfamily.

The protein localises to the cytoplasm. It carries out the reaction [protein]-peptidylproline (omega=180) = [protein]-peptidylproline (omega=0). Involved in protein export. Acts as a chaperone by maintaining the newly synthesized protein in an open conformation. Functions as a peptidyl-prolyl cis-trans isomerase. In Burkholderia ambifaria (strain ATCC BAA-244 / DSM 16087 / CCUG 44356 / LMG 19182 / AMMD) (Burkholderia cepacia (strain AMMD)), this protein is Trigger factor.